We begin with the raw amino-acid sequence, 361 residues long: Glutaminyl-peptide cyclotransferase (361 aa).

Positions Met1–Gly28 are cleaved as a signal peptide. N-linked (GlcNAc...) asparagine glycosylation occurs at Asn49. Cys139 and Cys164 are joined by a disulfide. Asp159 is a Zn(2+) binding site. Asn183 carries an N-linked (GlcNAc...) asparagine glycan. Glu201 functions as the Proton acceptor in the catalytic mechanism. Glu202 lines the Zn(2+) pocket. The active-site Proton acceptor is Asp248. His330 is a binding site for Zn(2+).

The protein belongs to the glutaminyl-peptide cyclotransferase family. In terms of tissue distribution, expressed mainly in brain tissue.

It localises to the secreted. It catalyses the reaction N-terminal L-glutaminyl-[peptide] = N-terminal 5-oxo-L-prolyl-[peptide] + NH4(+). In terms of biological role, responsible for the biosynthesis of pyroglutamyl peptides. Has a bias against acidic and tryptophan residues adjacent to the N-terminal glutaminyl residue and a lack of importance of chain length after the second residue. Also catalyzes N-terminal pyroglutamate formation. This is Glutaminyl-peptide cyclotransferase (QPCT) from Bos taurus (Bovine).